A 556-amino-acid polypeptide reads, in one-letter code: 2-succinyl-5-enolpyruvyl-6-hydroxy-3-cyclohexene-1-carboxylate synthase (556 aa).

The protein belongs to the TPP enzyme family. MenD subfamily. Homodimer. Requires Mg(2+) as cofactor. The cofactor is Mn(2+). Thiamine diphosphate is required as a cofactor.

The catalysed reaction is isochorismate + 2-oxoglutarate + H(+) = 5-enolpyruvoyl-6-hydroxy-2-succinyl-cyclohex-3-ene-1-carboxylate + CO2. It participates in quinol/quinone metabolism; 1,4-dihydroxy-2-naphthoate biosynthesis; 1,4-dihydroxy-2-naphthoate from chorismate: step 2/7. The protein operates within quinol/quinone metabolism; menaquinone biosynthesis. In terms of biological role, catalyzes the thiamine diphosphate-dependent decarboxylation of 2-oxoglutarate and the subsequent addition of the resulting succinic semialdehyde-thiamine pyrophosphate anion to isochorismate to yield 2-succinyl-5-enolpyruvyl-6-hydroxy-3-cyclohexene-1-carboxylate (SEPHCHC). The protein is 2-succinyl-5-enolpyruvyl-6-hydroxy-3-cyclohexene-1-carboxylate synthase of Salmonella arizonae (strain ATCC BAA-731 / CDC346-86 / RSK2980).